The following is a 415-amino-acid chain: Squalene synthase 3 (415 aa).

The next 2 membrane-spanning stretches (helical) occupy residues 281–301 (AIFR…ALCY) and 392–412 (LIII…SNLP).

Belongs to the phytoene/squalene synthase family. Mg(2+) is required as a cofactor. The cofactor is Mn(2+).

It localises to the endoplasmic reticulum membrane. The enzyme catalyses 2 (2E,6E)-farnesyl diphosphate + NADH + H(+) = squalene + 2 diphosphate + NAD(+). It carries out the reaction 2 (2E,6E)-farnesyl diphosphate + NADPH + H(+) = squalene + 2 diphosphate + NADP(+). Its pathway is terpene metabolism; lanosterol biosynthesis; lanosterol from farnesyl diphosphate: step 1/3. Its function is as follows. Component of the triterpene saponins (e.g. ginsenosides or panaxosides) and phytosterols biosynthetic pathways. Catalyzes the biosynthesis of squalene. The sequence is that of Squalene synthase 3 from Panax ginseng (Korean ginseng).